A 266-amino-acid polypeptide reads, in one-letter code: Thymidylate synthase (266 aa).

R24 serves as a coordination point for dUMP. H54 contributes to the (6R)-5,10-methylene-5,6,7,8-tetrahydrofolate binding site. 129 to 130 is a binding site for dUMP; it reads RR. Residue C149 is the Nucleophile of the active site. Residues 169–172, N180, and 210–212 each bind dUMP; these read RSAD and HIY. D172 is a (6R)-5,10-methylene-5,6,7,8-tetrahydrofolate binding site. A265 lines the (6R)-5,10-methylene-5,6,7,8-tetrahydrofolate pocket.

Belongs to the thymidylate synthase family. Bacterial-type ThyA subfamily. In terms of assembly, homodimer.

The protein localises to the cytoplasm. It carries out the reaction dUMP + (6R)-5,10-methylene-5,6,7,8-tetrahydrofolate = 7,8-dihydrofolate + dTMP. The protein operates within pyrimidine metabolism; dTTP biosynthesis. Catalyzes the reductive methylation of 2'-deoxyuridine-5'-monophosphate (dUMP) to 2'-deoxythymidine-5'-monophosphate (dTMP) while utilizing 5,10-methylenetetrahydrofolate (mTHF) as the methyl donor and reductant in the reaction, yielding dihydrofolate (DHF) as a by-product. This enzymatic reaction provides an intracellular de novo source of dTMP, an essential precursor for DNA biosynthesis. The protein is Thymidylate synthase of Mycolicibacterium paratuberculosis (strain ATCC BAA-968 / K-10) (Mycobacterium paratuberculosis).